We begin with the raw amino-acid sequence, 213 residues long: ATP phosphoribosyltransferase (213 aa).

Belongs to the ATP phosphoribosyltransferase family. Short subfamily. In terms of assembly, heteromultimer composed of HisG and HisZ subunits.

Its subcellular location is the cytoplasm. The catalysed reaction is 1-(5-phospho-beta-D-ribosyl)-ATP + diphosphate = 5-phospho-alpha-D-ribose 1-diphosphate + ATP. It functions in the pathway amino-acid biosynthesis; L-histidine biosynthesis; L-histidine from 5-phospho-alpha-D-ribose 1-diphosphate: step 1/9. In terms of biological role, catalyzes the condensation of ATP and 5-phosphoribose 1-diphosphate to form N'-(5'-phosphoribosyl)-ATP (PR-ATP). Has a crucial role in the pathway because the rate of histidine biosynthesis seems to be controlled primarily by regulation of HisG enzymatic activity. The chain is ATP phosphoribosyltransferase from Listeria monocytogenes serotype 4b (strain F2365).